Here is a 599-residue protein sequence, read N- to C-terminus: Aspartate--tRNA(Asp/Asn) ligase (599 aa).

An L-aspartate-binding site is contributed by E174. The tract at residues 198-201 is aspartate; that stretch reads QLFK. R220 lines the L-aspartate pocket. ATP is bound by residues 220 to 222 and Q229; that span reads RDE. H457 contacts L-aspartate. E491 is an ATP binding site. R498 provides a ligand contact to L-aspartate. 543-546 lines the ATP pocket; it reads GLDR.

It belongs to the class-II aminoacyl-tRNA synthetase family. Type 1 subfamily. Homodimer.

Its subcellular location is the cytoplasm. The catalysed reaction is tRNA(Asx) + L-aspartate + ATP = L-aspartyl-tRNA(Asx) + AMP + diphosphate. Aspartyl-tRNA synthetase with relaxed tRNA specificity since it is able to aspartylate not only its cognate tRNA(Asp) but also tRNA(Asn). Reaction proceeds in two steps: L-aspartate is first activated by ATP to form Asp-AMP and then transferred to the acceptor end of tRNA(Asp/Asn). This is Aspartate--tRNA(Asp/Asn) ligase from Paraburkholderia phymatum (strain DSM 17167 / CIP 108236 / LMG 21445 / STM815) (Burkholderia phymatum).